The following is a 126-amino-acid chain: Fluoride-specific ion channel FluC (126 aa).

4 helical membrane-spanning segments follow: residues 5-25, 37-57, 65-85, and 101-121; these read ILVA…GAGV, VAIM…VVWA, LSPF…AFSL, and LYVA…LWVA. Na(+) is bound by residues glycine 75 and threonine 78.

Belongs to the fluoride channel Fluc/FEX (TC 1.A.43) family.

Its subcellular location is the cell inner membrane. The catalysed reaction is fluoride(in) = fluoride(out). Na(+) is not transported, but it plays an essential structural role and its presence is essential for fluoride channel function. Functionally, fluoride-specific ion channel. Important for reducing fluoride concentration in the cell, thus reducing its toxicity. This chain is Fluoride-specific ion channel FluC, found in Roseobacter denitrificans (strain ATCC 33942 / OCh 114) (Erythrobacter sp. (strain OCh 114)).